Here is a 211-residue protein sequence, read N- to C-terminus: Uridine kinase (211 aa).

13–20 lines the ATP pocket; that stretch reads GGTASGKT.

The protein belongs to the uridine kinase family.

It localises to the cytoplasm. The enzyme catalyses uridine + ATP = UMP + ADP + H(+). It catalyses the reaction cytidine + ATP = CMP + ADP + H(+). It functions in the pathway pyrimidine metabolism; CTP biosynthesis via salvage pathway; CTP from cytidine: step 1/3. Its pathway is pyrimidine metabolism; UMP biosynthesis via salvage pathway; UMP from uridine: step 1/1. The chain is Uridine kinase from Thermus thermophilus (strain ATCC BAA-163 / DSM 7039 / HB27).